The chain runs to 240 residues: Probable transcriptional regulatory protein Hac_0344 (240 aa).

It belongs to the TACO1 family.

Its subcellular location is the cytoplasm. This is Probable transcriptional regulatory protein Hac_0344 from Helicobacter acinonychis (strain Sheeba).